Consider the following 92-residue polypeptide: Small ribosomal subunit protein uS19 (92 aa).

The protein belongs to the universal ribosomal protein uS19 family.

Functionally, protein S19 forms a complex with S13 that binds strongly to the 16S ribosomal RNA. This Proteus mirabilis (strain HI4320) protein is Small ribosomal subunit protein uS19.